We begin with the raw amino-acid sequence, 502 residues long: Aspartyl/glutamyl-tRNA(Asn/Gln) amidotransferase subunit B (502 aa).

Belongs to the GatB/GatE family. GatB subfamily. In terms of assembly, heterotrimer of A, B and C subunits.

It carries out the reaction L-glutamyl-tRNA(Gln) + L-glutamine + ATP + H2O = L-glutaminyl-tRNA(Gln) + L-glutamate + ADP + phosphate + H(+). The enzyme catalyses L-aspartyl-tRNA(Asn) + L-glutamine + ATP + H2O = L-asparaginyl-tRNA(Asn) + L-glutamate + ADP + phosphate + 2 H(+). Allows the formation of correctly charged Asn-tRNA(Asn) or Gln-tRNA(Gln) through the transamidation of misacylated Asp-tRNA(Asn) or Glu-tRNA(Gln) in organisms which lack either or both of asparaginyl-tRNA or glutaminyl-tRNA synthetases. The reaction takes place in the presence of glutamine and ATP through an activated phospho-Asp-tRNA(Asn) or phospho-Glu-tRNA(Gln). This Brucella suis (strain ATCC 23445 / NCTC 10510) protein is Aspartyl/glutamyl-tRNA(Asn/Gln) amidotransferase subunit B.